A 121-amino-acid chain; its full sequence is Large ribosomal subunit protein uL14 (121 aa).

Belongs to the universal ribosomal protein uL14 family. As to quaternary structure, part of the 50S ribosomal subunit. Forms a cluster with proteins L3 and L19. In the 70S ribosome, L14 and L19 interact and together make contacts with the 16S rRNA in bridges B5 and B8.

Binds to 23S rRNA. Forms part of two intersubunit bridges in the 70S ribosome. This chain is Large ribosomal subunit protein uL14, found in Synechococcus sp. (strain WH7803).